A 60-amino-acid polypeptide reads, in one-letter code: Large ribosomal subunit protein bL32 (60 aa).

This sequence belongs to the bacterial ribosomal protein bL32 family.

This chain is Large ribosomal subunit protein bL32, found in Clostridium novyi (strain NT).